We begin with the raw amino-acid sequence, 486 residues long: NGFI-A-binding protein 1 (486 aa).

The interval Ala-4–Phe-82 is NCD1. Glycyl lysine isopeptide (Lys-Gly) (interchain with G-Cter in SUMO2) cross-links involve residues Lys-126, Lys-129, and Lys-143. Residues Trp-160 to Ser-187 form a disordered region. A phosphoserine mark is found at Ser-171 and Ser-182. Lys-211 is covalently cross-linked (Glycyl lysine isopeptide (Lys-Gly) (interchain with G-Cter in SUMO2)). Positions Leu-220 to Tyr-309 are NCD2. Positions Glu-306–Phe-337 are necessary for nuclear localization. Ser-327 carries the phosphoserine modification. Lys-332 is covalently cross-linked (Glycyl lysine isopeptide (Lys-Gly) (interchain with G-Cter in SUMO1); alternate). Residue Lys-332 forms a Glycyl lysine isopeptide (Lys-Gly) (interchain with G-Cter in SUMO2); alternate linkage. Glycyl lysine isopeptide (Lys-Gly) (interchain with G-Cter in SUMO2) cross-links involve residues Lys-354, Lys-368, and Lys-372. Positions Arg-398–Phe-438 are disordered. Over residues Gln-404 to Gly-417 the composition is skewed to low complexity. Ser-405 is subject to Phosphoserine. Glycyl lysine isopeptide (Lys-Gly) (interchain with G-Cter in SUMO2) cross-links involve residues Lys-453, Lys-464, and Lys-476. Lys-479 is covalently cross-linked (Glycyl lysine isopeptide (Lys-Gly) (interchain with G-Cter in SUMO1); alternate). Lys-479 is covalently cross-linked (Glycyl lysine isopeptide (Lys-Gly) (interchain with G-Cter in SUMO2); alternate).

This sequence belongs to the NAB family. As to quaternary structure, homomultimers may associate with EGR1 bound to DNA. In terms of tissue distribution, widely expressed in adult. In day 16 embryo highest levels in forebrain, thymus, salivary gland and cartilage.

The protein localises to the nucleus. In terms of biological role, acts as a transcriptional repressor for zinc finger transcription factors EGR1 and EGR2. This chain is NGFI-A-binding protein 1 (Nab1), found in Mus musculus (Mouse).